The sequence spans 336 residues: MPRGQASKRRAREKRRQARGEDQCLGGAQATAAEKEKLPSSSSPACQSPPQSFPNAGIPQESQRASYPSSPASAVSLTSSDEGAKGQKGESPNSFHGPSSSESTGRDLLNTKTGELVQFLLNKYIRKEPITREAMLKVINRKYKQHFPEILRRSTENVEVVFGLYLKEMDPSRQSYVLVGKLDFPNQGSLSDGGGFPLSGLLMVLLSTIFMHGNRATEEEMWECLNALGMYKGRKHFIYGEPQELVTKDLVREGYLEYQQVPSSDPPRYEFLWGPRARAETSKMKVLEFVAKLNDTVASTYKSRYEEALREEEEQARARAVARDSARARASRSFQP.

The segment covering 1 to 17 has biased composition (basic residues); that stretch reads MPRGQASKRRAREKRRQ. The segment at 1–108 is disordered; it reads MPRGQASKRR…SSSESTGRDL (108 aa). Composition is skewed to low complexity over residues 39–54 and 62–80; these read PSSSSPACQSPPQSFP and SQRASYPSSPASAVSLTSS. Positions 90–103 are enriched in polar residues; the sequence is ESPNSFHGPSSSES. The 228-residue stretch at 109–336 folds into the MAGE domain; sequence LNTKTGELVQ…RARASRSFQP (228 aa).

The chain is Melanoma-associated antigen B17 (MAGEB17) from Homo sapiens (Human).